The following is a 91-amino-acid chain: Large ribosomal subunit protein eL43 (91 aa).

The C4-type zinc-finger motif lies at Cys-39–Cys-60.

Belongs to the eukaryotic ribosomal protein eL43 family.

The chain is Large ribosomal subunit protein eL43 from Caenorhabditis elegans.